Reading from the N-terminus, the 138-residue chain is Transcription antitermination protein NusB (138 aa).

This sequence belongs to the NusB family.

Involved in transcription antitermination. Required for transcription of ribosomal RNA (rRNA) genes. Binds specifically to the boxA antiterminator sequence of the ribosomal RNA (rrn) operons. This Leptospira borgpetersenii serovar Hardjo-bovis (strain JB197) protein is Transcription antitermination protein NusB.